Reading from the N-terminus, the 466-residue chain is Coagulation factor VII (466 aa).

The signal sequence occupies residues 1–20 (MVSQALRLLCLLLGLQGCLA). Residues 21–60 (AGGVAEASGGETRDXXWKPGPHRVFITQEEAHGVLHRRRR) constitute a propeptide that is removed on maturation. A Gla domain is found at 61–105 (ANAFLEELRPGSLERECKEEQCSFEEAREIFKDLERTKLFWISYS). A 4-carboxyglutamate mark is found at Glu66, Glu67, Glu74, Glu76, Glu79, Glu80, Glu85, Glu86, Glu89, and Glu95. A disulfide bond links Cys77 and Cys82. Residues 106 to 142 (DGDQCASSPCQNGGSCKDQLQSYICFCLPAFEGRNCE) enclose the EGF-like 1; calcium-binding domain. Intrachain disulfides connect Cys110–Cys121, Cys115–Cys130, Cys132–Cys141, Cys151–Cys162, Cys158–Cys172, Cys174–Cys187, Cys195–Cys322, Cys219–Cys224, Cys238–Cys254, and Cys370–Cys389. Ser112 carries O-linked (Glc...) serine; alternate glycosylation. Ser112 is a glycosylation site (O-linked (Xyl...) serine; alternate). An O-linked (Fuc) serine glycan is attached at Ser120. Residue Asp123 is modified to (3R)-3-hydroxyaspartate. The EGF-like 2 domain maps to 147–188 (DQLICVNENGGCEQYCSDHTGTKRSCRCHEGYSLLADGVSCT). The N-linked (GlcNAc...) asparagine glycan is linked to Asn205. In terms of domain architecture, Peptidase S1 spans 213-452 (IVGGKVCPKG…YIEWLQKLMR (240 aa)). Active-site charge relay system residues include His253 and Asp302. Residue Asn382 is glycosylated (N-linked (GlcNAc...) asparagine). Residue Asp398 coordinates substrate. A disulfide bridge connects residues Cys400 and Cys428. Residue Ser404 is the Charge relay system of the active site.

Belongs to the peptidase S1 family. As to quaternary structure, heterodimer of a light chain and a heavy chain linked by a disulfide bond. The vitamin K-dependent, enzymatic carboxylation of some glutamate residues allows the modified protein to bind calcium. Post-translationally, the iron and 2-oxoglutarate dependent 3-hydroxylation of aspartate and asparagine is (R) stereospecific within EGF domains. In terms of processing, O-glycosylated. O-fucosylated by POFUT1 on a conserved serine or threonine residue found in the consensus sequence C2-X(4,5)-[S/T]-C3 of EGF domains, where C2 and C3 are the second and third conserved cysteines. Can be either O-glucosylated or O-xylosylated at Ser-112 by POGLUT1.

The protein resides in the secreted. It carries out the reaction Selective cleavage of Arg-|-Ile bond in factor X to form factor Xa.. Functionally, initiates the extrinsic pathway of blood coagulation. Serine protease that circulates in the blood in a zymogen form. Factor VII is converted to factor VIIa by factor Xa, factor XIIa, factor IXa, or thrombin by minor proteolysis. In the presence of tissue factor and calcium ions, factor VIIa then converts factor X to factor Xa by limited proteolysis. Factor VIIa also converts factor IX to factor IXa in the presence of tissue factor and calcium. The polypeptide is Coagulation factor VII (F7) (Pan troglodytes (Chimpanzee)).